A 436-amino-acid chain; its full sequence is Adenosylmethionine-8-amino-7-oxononanoate aminotransferase (436 aa).

Residue Trp-56 participates in substrate binding. A pyridoxal 5'-phosphate-binding site is contributed by 114–115 (GS). Tyr-148 is a substrate binding site. Asp-245 provides a ligand contact to pyridoxal 5'-phosphate. The substrate site is built by Lys-274, Ser-309, and Arg-400. An N6-(pyridoxal phosphate)lysine modification is found at Lys-274.

The protein belongs to the class-III pyridoxal-phosphate-dependent aminotransferase family. BioA subfamily. Homodimer. Pyridoxal 5'-phosphate is required as a cofactor.

Its subcellular location is the cytoplasm. It carries out the reaction (8S)-8-amino-7-oxononanoate + S-adenosyl-L-methionine = S-adenosyl-4-methylsulfanyl-2-oxobutanoate + (7R,8S)-7,8-diammoniononanoate. Its pathway is cofactor biosynthesis; biotin biosynthesis; 7,8-diaminononanoate from 8-amino-7-oxononanoate (SAM route): step 1/1. Its function is as follows. Catalyzes the transfer of the alpha-amino group from S-adenosyl-L-methionine (SAM) to 7-keto-8-aminopelargonic acid (KAPA) to form 7,8-diaminopelargonic acid (DAPA). It is the only aminotransferase known to utilize SAM as an amino donor. This Helicobacter pylori (strain ATCC 700392 / 26695) (Campylobacter pylori) protein is Adenosylmethionine-8-amino-7-oxononanoate aminotransferase.